The chain runs to 74 residues: Cyclin-dependent kinases regulatory subunit (74 aa).

This sequence belongs to the CKS family. In terms of assembly, forms a homohexamer that can probably bind six kinase subunits.

In terms of biological role, binds to the catalytic subunit of the cyclin dependent kinases Cdk1 and Cdk2, and is essential for their biological function. The protein is Cyclin-dependent kinases regulatory subunit (Cks30A) of Drosophila melanogaster (Fruit fly).